The following is a 118-amino-acid chain: Nucleoid-associated protein TM_0687 (118 aa).

Belongs to the YbaB/EbfC family. Homodimer.

The protein resides in the cytoplasm. It is found in the nucleoid. Functionally, binds to DNA and alters its conformation. May be involved in regulation of gene expression, nucleoid organization and DNA protection. The chain is Nucleoid-associated protein TM_0687 from Thermotoga maritima (strain ATCC 43589 / DSM 3109 / JCM 10099 / NBRC 100826 / MSB8).